A 622-amino-acid polypeptide reads, in one-letter code: Chaperone protein HscA homolog (622 aa).

It belongs to the heat shock protein 70 family.

Functionally, chaperone involved in the maturation of iron-sulfur cluster-containing proteins. Has a low intrinsic ATPase activity which is markedly stimulated by HscB. The polypeptide is Chaperone protein HscA homolog (Azoarcus sp. (strain BH72)).